Here is a 314-residue protein sequence, read N- to C-terminus: 4-hydroxy-3-methylbut-2-enyl diphosphate reductase (314 aa).

Residue C12 coordinates [4Fe-4S] cluster. (2E)-4-hydroxy-3-methylbut-2-enyl diphosphate-binding residues include H43 and H81. Positions 43 and 81 each coordinate dimethylallyl diphosphate. 2 residues coordinate isopentenyl diphosphate: H43 and H81. C103 is a [4Fe-4S] cluster binding site. Residue H131 participates in (2E)-4-hydroxy-3-methylbut-2-enyl diphosphate binding. H131 lines the dimethylallyl diphosphate pocket. H131 contacts isopentenyl diphosphate. E133 acts as the Proton donor in catalysis. T170 is a (2E)-4-hydroxy-3-methylbut-2-enyl diphosphate binding site. C198 lines the [4Fe-4S] cluster pocket. Residues S226, N228, and S271 each contribute to the (2E)-4-hydroxy-3-methylbut-2-enyl diphosphate site. 3 residues coordinate dimethylallyl diphosphate: S226, N228, and S271. Residues S226, N228, and S271 each contribute to the isopentenyl diphosphate site.

It belongs to the IspH family. It depends on [4Fe-4S] cluster as a cofactor.

The catalysed reaction is isopentenyl diphosphate + 2 oxidized [2Fe-2S]-[ferredoxin] + H2O = (2E)-4-hydroxy-3-methylbut-2-enyl diphosphate + 2 reduced [2Fe-2S]-[ferredoxin] + 2 H(+). It catalyses the reaction dimethylallyl diphosphate + 2 oxidized [2Fe-2S]-[ferredoxin] + H2O = (2E)-4-hydroxy-3-methylbut-2-enyl diphosphate + 2 reduced [2Fe-2S]-[ferredoxin] + 2 H(+). The protein operates within isoprenoid biosynthesis; dimethylallyl diphosphate biosynthesis; dimethylallyl diphosphate from (2E)-4-hydroxy-3-methylbutenyl diphosphate: step 1/1. It functions in the pathway isoprenoid biosynthesis; isopentenyl diphosphate biosynthesis via DXP pathway; isopentenyl diphosphate from 1-deoxy-D-xylulose 5-phosphate: step 6/6. Functionally, catalyzes the conversion of 1-hydroxy-2-methyl-2-(E)-butenyl 4-diphosphate (HMBPP) into a mixture of isopentenyl diphosphate (IPP) and dimethylallyl diphosphate (DMAPP). Acts in the terminal step of the DOXP/MEP pathway for isoprenoid precursor biosynthesis. This is 4-hydroxy-3-methylbut-2-enyl diphosphate reductase from Shouchella clausii (strain KSM-K16) (Alkalihalobacillus clausii).